Reading from the N-terminus, the 748-residue chain is Signal transducer and activator of transcription 4 (748 aa).

In terms of domain architecture, SH2 spans 569-664 (WIDGYVMGFV…ENPLKYLYPD (96 aa)). Lysine 667 bears the N6-acetyllysine mark. Tyrosine 693 carries the post-translational modification Phosphotyrosine; by JAK. The residue at position 721 (serine 721) is a Phosphoserine; by MAP2K6.

The protein belongs to the transcription factor STAT family. As to quaternary structure, forms a homodimer or a heterodimer with a related family member. Interacts with ARL2BP. The SH2 domain interacts, in vitro, with IL12RB2 via a short cytoplasmic domain. Interacts with STAT1. Interacts with JUN; this complex efficiently interacts with the AP-1-related sequence of the IFN-gamma. In terms of processing, acetylation at Lys-667 is required for JAK2-mediated phosphorylation and activation of STAT4. Post-translationally, tyrosine phosphorylated upon IL12 and IFN-alpha activation, but not by IFN-gamma in T-lymphocytes and NK cells. Serine phosphorylation is required for maximal transcriptional activity but not for DNA binding. Phosphorylation by MAP2K6 at Ser-721 is required for full transcriptional activity induced by IL12. However this serine phosphorylation is not required for cell proliferation although critical for IFN-gamma production.

It is found in the cytoplasm. Its subcellular location is the nucleus. Functionally, transcriptional regulator mainly expressed in hematopoietic cells that plays a critical role in cellular growth, differentiation and immune response. Plays a key role in the differentiation of T-helper 1 cells and the production of interferon-gamma. Also participates in multiple neutrophil functions including chemotaxis and production of the neutrophil extracellular traps. After IL12 binding to its receptor IL12RB2, STAT4 interacts with the intracellular domain of IL12RB2 and becomes tyrosine phosphorylated. Phosphorylated STAT4 then homodimerizes and migrates to the nucleus where it can recognize STAT target sequences present in IL12 responsive genes. Although IL12 appears to be the predominant activating signal, STAT4 can also be phosphorylated and activated in response to IFN-gamma stimulation via JAK1 and TYK2 and in response to different interleukins including IL23, IL2 and IL35. Transcription activation of IFN-gamma gene is mediated by interaction with JUN that forms a complex that efficiently interacts with the AP-1-related sequence of the IFN-gamma promoter. In response to IFN-alpha/beta signaling, acts as a transcriptional repressor and suppresses IL5 and IL13 mRNA expression during response to T-cell receptor (TCR) activation. This Homo sapiens (Human) protein is Signal transducer and activator of transcription 4 (STAT4).